The chain runs to 495 residues: Ectonucleoside triphosphate diphosphohydrolase 8 (495 aa).

Residues 1-8 (MGLTWKQR) lie on the Cytoplasmic side of the membrane. A helical membrane pass occupies residues 9–29 (VFTALLGAAAVSGLTALLLVL). The Extracellular portion of the chain corresponds to 30–466 (VGTMNVLLPP…PAQGWAQSFG (437 aa)). A disulfide bond links C78 and C102. E168 (proton acceptor) is an active-site residue. The cysteines at positions 246 and 292 are disulfide-linked. N-linked (GlcNAc...) asparagine glycosylation is found at N303 and N324. 2 cysteine pairs are disulfide-bonded: C328–C334 and C380–C403. Residues 467-487 (VWAAGVVFVVLTLAATLGAVA) traverse the membrane as a helical segment. Residues 488–495 (VQVFWLQD) lie on the Cytoplasmic side of the membrane.

Belongs to the GDA1/CD39 NTPase family. Ca(2+) is required as a cofactor. The cofactor is Mg(2+). In terms of processing, N-glycosylated.

The protein localises to the cell membrane. The enzyme catalyses a ribonucleoside 5'-triphosphate + 2 H2O = a ribonucleoside 5'-phosphate + 2 phosphate + 2 H(+). Canalicular ectonucleoside NTPDase responsible for the main hepatic NTPDase activity. Ectonucleoside NTPDases catalyze the hydrolysis of gamma- and beta-phosphate residues of nucleotides, playing a central role in concentration of extracellular nucleotides. Has activity toward ATP, ADP, UTP and UDP, but not toward AMP. The sequence is that of Ectonucleoside triphosphate diphosphohydrolase 8 (ENTPD8) from Bos taurus (Bovine).